Here is a 231-residue protein sequence, read N- to C-terminus: 2-C-methyl-D-erythritol 4-phosphate cytidylyltransferase (231 aa).

It belongs to the IspD/TarI cytidylyltransferase family. IspD subfamily.

It carries out the reaction 2-C-methyl-D-erythritol 4-phosphate + CTP + H(+) = 4-CDP-2-C-methyl-D-erythritol + diphosphate. It functions in the pathway isoprenoid biosynthesis; isopentenyl diphosphate biosynthesis via DXP pathway; isopentenyl diphosphate from 1-deoxy-D-xylulose 5-phosphate: step 2/6. Functionally, catalyzes the formation of 4-diphosphocytidyl-2-C-methyl-D-erythritol from CTP and 2-C-methyl-D-erythritol 4-phosphate (MEP). The polypeptide is 2-C-methyl-D-erythritol 4-phosphate cytidylyltransferase (Clostridium novyi (strain NT)).